The following is a 333-amino-acid chain: Thiamine-monophosphate kinase (333 aa).

Residues Asp-44, Ser-58, Thr-59, and Asp-60 each contribute to the Mg(2+) site. Residue His-67 participates in substrate binding. The Mg(2+) site is built by Asp-89 and Asp-137. ATP contacts are provided by residues 136 to 137 and Arg-162; that span reads GD. Asp-224 serves as a coordination point for Mg(2+). Ser-226 contacts ATP. Asp-227 provides a ligand contact to Mg(2+). Glu-278 and Trp-320 together coordinate substrate.

The protein belongs to the thiamine-monophosphate kinase family.

The enzyme catalyses thiamine phosphate + ATP = thiamine diphosphate + ADP. Its pathway is cofactor biosynthesis; thiamine diphosphate biosynthesis; thiamine diphosphate from thiamine phosphate: step 1/1. In terms of biological role, catalyzes the ATP-dependent phosphorylation of thiamine-monophosphate (TMP) to form thiamine-pyrophosphate (TPP), the active form of vitamin B1. The sequence is that of Thiamine-monophosphate kinase from Mycobacterium tuberculosis (strain CDC 1551 / Oshkosh).